A 179-amino-acid chain; its full sequence is UPF0227 protein PM0825 (179 aa).

The protein belongs to the UPF0227 family.

This is UPF0227 protein PM0825 from Pasteurella multocida (strain Pm70).